The following is a 440-amino-acid chain: UDP-glucose 6-dehydrogenase YwqF (440 aa).

Residues 2-19, valine 11, aspartate 30, lysine 35, threonine 121, and glutamate 155 contribute to the NAD(+) site; that span reads NITVIGTGYVGLVTGVSL. Residues 151 to 155, lysine 204, asparagine 208, 249 to 253, and glycine 257 contribute to the substrate site; these read EFLRE and FLKAG. Cysteine 260 serves as the catalytic Nucleophile. Lysine 263 contacts NAD(+). Lysine 320 is a substrate binding site. Arginine 327 contacts NAD(+).

Belongs to the UDP-glucose/GDP-mannose dehydrogenase family. In terms of processing, phosphorylated on tyrosine residue(s). Phosphorylated by YwqD and dephosphorylated by YwqE in vitro.

The protein localises to the cytoplasm. The catalysed reaction is UDP-alpha-D-glucose + 2 NAD(+) + H2O = UDP-alpha-D-glucuronate + 2 NADH + 3 H(+). It participates in nucleotide-sugar biosynthesis; UDP-alpha-D-glucuronate biosynthesis; UDP-alpha-D-glucuronate from UDP-alpha-D-glucose: step 1/1. Its activity is regulated as follows. Competitively inhibited by UDP-glucose. Activated by phosphorylation, which may increase affinity for NAD(+); inhibited by dephosphorylation. Its function is as follows. Catalyzes the conversion of UDP-glucose into UDP-glucuronate, one of the precursors of teichuronic acid. In Bacillus subtilis (strain 168), this protein is UDP-glucose 6-dehydrogenase YwqF (ywqF).